A 310-amino-acid polypeptide reads, in one-letter code: 5'-adenylylsulfate reductase-like 4 (310 aa).

Residues 1–22 (MEKEILLLLLVIMFLTVADVDA) form the signal peptide. A Thioredoxin domain is found at 49–168 (GVESDERPRF…LVAFYSDVTG (120 aa)). N-linked (GlcNAc...) asparagine glycans are attached at residues Asn143 and Asn190. Residues 217-237 (LAIVFVLLRLLHLIYPTLVVF) traverse the membrane as a helical segment.

It localises to the membrane. The chain is 5'-adenylylsulfate reductase-like 4 (APRL4) from Arabidopsis thaliana (Mouse-ear cress).